Consider the following 72-residue polypeptide: Translation initiation factor IF-1 (72 aa).

The 72-residue stretch at 1-72 (MSKEDSFEME…SKGRITYRAR (72 aa)) folds into the S1-like domain.

It belongs to the IF-1 family. As to quaternary structure, component of the 30S ribosomal translation pre-initiation complex which assembles on the 30S ribosome in the order IF-2 and IF-3, IF-1 and N-formylmethionyl-tRNA(fMet); mRNA recruitment can occur at any time during PIC assembly.

Its subcellular location is the cytoplasm. One of the essential components for the initiation of protein synthesis. Stabilizes the binding of IF-2 and IF-3 on the 30S subunit to which N-formylmethionyl-tRNA(fMet) subsequently binds. Helps modulate mRNA selection, yielding the 30S pre-initiation complex (PIC). Upon addition of the 50S ribosomal subunit IF-1, IF-2 and IF-3 are released leaving the mature 70S translation initiation complex. In Pseudomonas savastanoi pv. phaseolicola (strain 1448A / Race 6) (Pseudomonas syringae pv. phaseolicola (strain 1448A / Race 6)), this protein is Translation initiation factor IF-1.